A 290-amino-acid chain; its full sequence is Dual-specificity RNA pseudouridine synthase RluF (290 aa).

An S4 RNA-binding domain is found at 7–72; the sequence is VRLNKYISES…EAEDLVLIAL (66 aa). Interaction with RNA regions lie at residues 105–108 and 187–190; these read RLDK and RQIR. Residue Asp-107 is the Nucleophile of the active site. The interval 243-290 is disordered; that stretch reads VKPKAKAKPKTAGIKRPVVKMEKTAEKGGRPASNGKRFTSPGRKKKGR. Residues 261–271 are compositionally biased toward basic and acidic residues; that stretch reads VKMEKTAEKGG.

Belongs to the pseudouridine synthase RsuA family. In terms of assembly, monomer.

The catalysed reaction is uridine(2604) in 23S rRNA = pseudouridine(2604) in 23S rRNA. It catalyses the reaction uridine(35) in tRNA(Tyr) = pseudouridine(35) in tRNA(Tyr). Dual specificity enzyme that catalyzes the synthesis of pseudouridine from uracil-2604 in 23S ribosomal RNA and from uracil-35 in the anticodon of tRNA(Tyr). Can, to a small extent, also react with uracil-2605. The chain is Dual-specificity RNA pseudouridine synthase RluF (rluF) from Escherichia coli (strain K12).